A 352-amino-acid chain; its full sequence is Glycerol-3-phosphate dehydrogenase [NAD(P)+] (352 aa).

NADPH is bound by residues Trp-11, Arg-37, and Lys-112. The sn-glycerol 3-phosphate site is built by Lys-112, Gly-153, and Ser-155. NADPH is bound at residue Ala-157. Positions 208, 261, 271, 272, and 273 each coordinate sn-glycerol 3-phosphate. Residue Lys-208 is the Proton acceptor of the active site. NADPH is bound at residue Arg-272. Residues Val-296 and Glu-298 each contribute to the NADPH site.

It belongs to the NAD-dependent glycerol-3-phosphate dehydrogenase family.

Its subcellular location is the cytoplasm. It catalyses the reaction sn-glycerol 3-phosphate + NAD(+) = dihydroxyacetone phosphate + NADH + H(+). It carries out the reaction sn-glycerol 3-phosphate + NADP(+) = dihydroxyacetone phosphate + NADPH + H(+). The protein operates within membrane lipid metabolism; glycerophospholipid metabolism. In terms of biological role, catalyzes the reduction of the glycolytic intermediate dihydroxyacetone phosphate (DHAP) to sn-glycerol 3-phosphate (G3P), the key precursor for phospholipid synthesis. This Polaromonas naphthalenivorans (strain CJ2) protein is Glycerol-3-phosphate dehydrogenase [NAD(P)+].